The primary structure comprises 348 residues: Dihydroorotate dehydrogenase (quinone) (348 aa).

FMN is bound by residues 60-64 and Thr-84; that span reads AGLDK. Residue Lys-64 coordinates substrate. Position 109-113 (109-113) interacts with substrate; it reads NRMGF. Residues Asn-137 and Asn-170 each coordinate FMN. Asn-170 is a binding site for substrate. The active-site Nucleophile is the Ser-173. Asn-175 is a binding site for substrate. The FMN site is built by Lys-215 and Thr-243. 244 to 245 serves as a coordination point for substrate; it reads NT. FMN is bound by residues Gly-266, Gly-295, and 316 to 317; that span reads YS.

It belongs to the dihydroorotate dehydrogenase family. Type 2 subfamily. As to quaternary structure, monomer. Requires FMN as cofactor.

It is found in the cell membrane. The catalysed reaction is (S)-dihydroorotate + a quinone = orotate + a quinol. It participates in pyrimidine metabolism; UMP biosynthesis via de novo pathway; orotate from (S)-dihydroorotate (quinone route): step 1/1. Functionally, catalyzes the conversion of dihydroorotate to orotate with quinone as electron acceptor. This Nitrosospira multiformis (strain ATCC 25196 / NCIMB 11849 / C 71) protein is Dihydroorotate dehydrogenase (quinone).